The following is a 766-amino-acid chain: Darlin (766 aa).

4 ARM repeats span residues 82–119, 167–208, 423–464, and 465–537; these read QLFEFLLPNGVETLNTDTTVEQSELFSMVCRLLGNLTY, DFIQ…NLVD, EPNC…NLTL, and PTIN…ASMD. The disordered stretch occupies residues 561–585; sequence EEKEKTIEKTDEKTDEKTNEKKQSK. One copy of the ARM 5 repeat lies at 610-649; it reads HQEKMKQLIEESVEPFFSLLQSPFPILQVEGAKGLVLLIK.

It belongs to the RAP1GDS1 family. Binds to small GTPases racE, racC but not rab21. Binds preferentially to GDP-bound racE.

In terms of biological role, part of a signaling pathway that initiates the aggregation and leads to the formation of aggregation centers or streams. Not essential for cytokinesis, pinocytosis or phagocytosis. Not essential for development, except in starvation-induced aggregation. The chain is Darlin (darA) from Dictyostelium discoideum (Social amoeba).